The primary structure comprises 247 residues: Acetate transporter protein patA (247 aa).

N-linked (GlcNAc...) asparagine glycosylation occurs at Asn20. 6 helical membrane-spanning segments follow: residues 37 to 57 (PPIT…AIAF), 71 to 91 (AITN…LVLV), 106 to 126 (VFGG…PAFG), 141 to 161 (ALGY…IAAM), 169 to 189 (AMLG…FAMA), and 202 to 222 (AAGA…AHLM).

Belongs to the acetate uptake transporter (AceTr) (TC 2.A.96) family.

It is found in the endoplasmic reticulum membrane. The protein operates within mycotoxin biosynthesis; patulin biosynthesis. In terms of biological role, acetate transporter protein; part of the gene cluster that mediates the biosynthesis of patulin, an acetate-derived tetraketide mycotoxin produced by several fungal species that shows antimicrobial properties against several bacteria. May be involved in the uptake of acetate, a substrate for the synthesis of 6-methylsalicylic acid by the polyketide synthase patK. The sequence is that of Acetate transporter protein patA from Aspergillus clavatus (strain ATCC 1007 / CBS 513.65 / DSM 816 / NCTC 3887 / NRRL 1 / QM 1276 / 107).